We begin with the raw amino-acid sequence, 324 residues long: Fructose-1,6-bisphosphatase class 1 (324 aa).

Residues E88, D107, L109, and D110 each coordinate Mg(2+). Substrate contacts are provided by residues 110-113 (DGSS), N199, and K265. Residue E271 participates in Mg(2+) binding.

Belongs to the FBPase class 1 family. Homotetramer. Mg(2+) is required as a cofactor.

The protein resides in the cytoplasm. It catalyses the reaction beta-D-fructose 1,6-bisphosphate + H2O = beta-D-fructose 6-phosphate + phosphate. The protein operates within carbohydrate biosynthesis; gluconeogenesis. The protein is Fructose-1,6-bisphosphatase class 1 of Neisseria meningitidis serogroup C (strain 053442).